The chain runs to 312 residues: Aspartate carbamoyltransferase catalytic subunit (312 aa).

2 residues coordinate carbamoyl phosphate: arginine 57 and threonine 58. L-aspartate is bound at residue lysine 85. Carbamoyl phosphate is bound by residues arginine 107, histidine 135, and glutamine 138. Residues arginine 168 and arginine 222 each coordinate L-aspartate. The carbamoyl phosphate site is built by glycine 264 and proline 265.

This sequence belongs to the aspartate/ornithine carbamoyltransferase superfamily. ATCase family. In terms of assembly, heterododecamer (2C3:3R2) of six catalytic PyrB chains organized as two trimers (C3), and six regulatory PyrI chains organized as three dimers (R2).

It catalyses the reaction carbamoyl phosphate + L-aspartate = N-carbamoyl-L-aspartate + phosphate + H(+). The protein operates within pyrimidine metabolism; UMP biosynthesis via de novo pathway; (S)-dihydroorotate from bicarbonate: step 2/3. In terms of biological role, catalyzes the condensation of carbamoyl phosphate and aspartate to form carbamoyl aspartate and inorganic phosphate, the committed step in the de novo pyrimidine nucleotide biosynthesis pathway. The protein is Aspartate carbamoyltransferase catalytic subunit of Carboxydothermus hydrogenoformans (strain ATCC BAA-161 / DSM 6008 / Z-2901).